The sequence spans 1021 residues: Collagen alpha-1(I) chain (1021 aa).

The disordered stretch occupies residues 1-1021 (DEKSAGGISV…PGPPGPPGPP (1021 aa)). Lys-3 carries the allysine modification. Phosphoserine is present on Ser-4. Residues Pro-23, Pro-26, Pro-29, Pro-38, Pro-41, Pro-44, Pro-59, Pro-74, Pro-80, Pro-89, and Pro-95 each carry the 4-hydroxyproline modification. Over residues 31–50 (PQGFQGPPGEPGEPGASGPM) the composition is skewed to low complexity. Residues 62–76 (NGDDGEAGKPGRPGE) show a composition bias toward basic and acidic residues. 5-hydroxylysine; alternate is present on Lys-98. Lys-98 carries O-linked (Gal...) hydroxylysine; alternate glycosylation. Residue Ser-104 is modified to Phosphoserine. Low complexity predominate over residues 112–128 (DAGPAGPKGEPGSPGEN). 16 positions are modified to 4-hydroxyproline: Pro-122, Pro-125, Pro-131, Pro-140, Pro-146, Pro-167, Pro-176, Pro-179, Pro-206, Pro-209, Pro-221, Pro-227, Pro-236, Pro-242, Pro-245, and Pro-260. Residues 146-164 (PGASGPAGARGNDGATGAA) are compositionally biased toward low complexity. A compositionally biased stretch (pro residues) spans 166 to 178 (PPGPTGPAGPPGF). Low complexity predominate over residues 212–262 (AGAAGPAGNPGADGQPGAKGANGAPGIAGAPGFPGARGPSGPQGPSGAPGP). Lys-263 carries the 5-hydroxylysine modification. 8 positions are modified to 4-hydroxyproline: Pro-269, Pro-272, Pro-284, Pro-293, Pro-308, Pro-314, Pro-323, and Pro-329. The segment covering 318–327 (GERGGPGSRG) has biased composition (gly residues). Lys-338 bears the 5-hydroxylysine mark. 28 positions are modified to 4-hydroxyproline: Pro-347, Pro-356, Pro-362, Pro-368, Pro-377, Pro-380, Pro-389, Pro-398, Pro-404, Pro-416, Pro-425, Pro-434, Pro-437, Pro-455, Pro-472, Pro-478, Pro-484, Pro-490, Pro-496, Pro-502, Pro-514, Pro-523, Pro-534, Pro-546, Pro-549, Pro-555, Pro-561, and Pro-570. A compositionally biased stretch (low complexity) spans 371-425 (KGLTGSPGSPGPDGKTGPPGPAGQDGRPGPAGPPGARGQAGVMGFPGPKGAAGEP). Residues 484–493 (PGEAGKPGEQ) show a composition bias toward low complexity. Low complexity predominate over residues 536–558 (NDGAKGDAGAPGAPGSQGAPGLQ). Lys-582 bears the 5-hydroxylysine mark. 4-hydroxyproline is present on residues Pro-588 and Pro-603. Residues 615-629 (AGPSGPAGPTGARGA) are compositionally biased toward low complexity. Ser-618 bears the Phosphoserine mark. 7 positions are modified to 4-hydroxyproline: Pro-630, Pro-636, Pro-639, Pro-648, Pro-654, Pro-681, and Pro-690. The segment covering 642 to 672 (AGFAGPPGADGQPGAKGEPGDAGAKGDAGPS) has biased composition (low complexity). The residue at position 693 (Lys-693) is a 5-hydroxylysine. Residues 698 to 714 (SAGPPGATGFPGAAGRV) show a composition bias toward low complexity. 2 positions are modified to 4-hydroxyproline: Pro-702 and Pro-708. Pro-716 is subject to 3-hydroxyproline. A 4-hydroxyproline mark is found at Pro-717, Pro-726, Pro-729, Pro-750, Pro-759, Pro-768, Pro-777, Pro-794, Pro-803, Pro-806, Pro-812, Pro-827, Pro-833, Pro-839, Pro-848, and Pro-854. Low complexity predominate over residues 743-752 (ETGPAGRPGE). The span at 762–777 (SGEKGSPGADGPAGAP) shows a compositional bias: low complexity. Pro residues predominate over residues 826–836 (PPGPMGPPGLA). The span at 838-853 (PPGEAGREGSPGAEGS) shows a compositional bias: low complexity. At Lys-863 the chain carries 5-hydroxylysine. The span at 871–886 (PGPPGAPGAPGAPGPV) shows a compositional bias: pro residues. Pro-874, Pro-877, and Pro-880 each carry 4-hydroxyproline. Residues 907–921 (AGPAGARGPAGPQGP) are compositionally biased toward low complexity. The span at 922–936 (RGDKGETGEQGDRGI) shows a compositional bias: basic and acidic residues. Lys-925 carries the post-translational modification 5-hydroxylysine. Lys-937 is modified (5-hydroxylysine; alternate). Lys-937 carries an O-linked (Gal...) hydroxylysine; alternate glycan. Residues Pro-952, Pro-955, Pro-973, and Pro-988 each carry the 4-hydroxyproline modification. The span at 955–988 (PGEQGPSGASGPAGPRGPPGSAGTPGKDGLNGLP) shows a compositional bias: low complexity. Pro-993 is subject to 3-hydroxyproline. Pro-994 bears the 4-hydroxyproline mark. The span at 1006–1021 (VGPPGPPGPPGPPGPP) shows a compositional bias: pro residues. Pro-1008 carries the post-translational modification 3-hydroxyproline. Pro-1009 carries the post-translational modification 4-hydroxyproline. Pro-1011 carries the 3-hydroxyproline modification. Pro-1012 is subject to 4-hydroxyproline. Pro-1014 bears the 3-hydroxyproline mark. Pro-1015, Pro-1018, and Pro-1021 each carry 4-hydroxyproline.

This sequence belongs to the fibrillar collagen family. In terms of assembly, trimers of one alpha 2(I) and two alpha 1(I) chains. In terms of processing, contains mostly 4-hydroxyproline. Proline residues at the third position of the tripeptide repeating unit (G-X-Y) are hydroxylated in some or all of the chains. Contains 3-hydroxyproline at a few sites. This modification occurs on the first proline residue in the sequence motif Gly-Pro-Hyp, where Hyp is 4-hydroxyproline. Post-translationally, lysine residues at the third position of the tripeptide repeating unit (G-X-Y) are 5-hydroxylated in some or all of the chains. In terms of processing, O-glycosylated on hydroxylated lysine residues. The O-linked glycan consists of a Glc-Gal disaccharide. In terms of tissue distribution, expressed in bones.

Its subcellular location is the secreted. The protein resides in the extracellular space. It localises to the extracellular matrix. In terms of biological role, type I collagen is a member of group I collagen (fibrillar forming collagen). The sequence is that of Collagen alpha-1(I) chain from Doedicurus sp. (South American giant glyptodont).